The sequence spans 680 residues: GTPase Obg (680 aa).

Residues 2–160 enclose the Obg domain; sequence DQFIDVVSFE…LNIRLEVKLI (159 aa). Residues 161–336 form the OBG-type G domain; the sequence is ADIGLVGMPN…LDGDMLDKVT (176 aa). Residues 167 to 174, 192 to 196, 214 to 217, 281 to 284, and 317 to 319 contribute to the GTP site; these read GMPNTGKS, FTTLT, DIPG, NKTD, and PEI. Residues Ser174 and Thr194 each contribute to the Mg(2+) site. The segment at 371-680 is radical SAM domain; that stretch reads TKRVFGPVVS…NGVLSYAVNI (310 aa). One can recognise a Radical SAM core domain in the interval 383–613; it reads LGNSLGIDVI…IEIDVPSVSD (231 aa). Cys397, Cys401, and Cys404 together coordinate [4Fe-4S] cluster.

It belongs to the TRAFAC class OBG-HflX-like GTPase superfamily. OBG GTPase family. As to quaternary structure, monomer. Requires Mg(2+) as cofactor. [4Fe-4S] cluster is required as a cofactor.

It is found in the cytoplasm. In terms of biological role, an essential GTPase which binds GTP, GDP and possibly (p)ppGpp with moderate affinity, with high nucleotide exchange rates and a fairly low GTP hydrolysis rate. Plays a role in control of the cell cycle, stress response, ribosome biogenesis and in those bacteria that undergo differentiation, in morphogenesis control. The protein is GTPase Obg of Brachyspira hyodysenteriae (strain ATCC 49526 / WA1).